Consider the following 68-residue polypeptide: Small ribosomal subunit protein bS21 (68 aa).

It belongs to the bacterial ribosomal protein bS21 family.

This is Small ribosomal subunit protein bS21 from Cereibacter sphaeroides (strain ATCC 17029 / ATH 2.4.9) (Rhodobacter sphaeroides).